Here is a 364-residue protein sequence, read N- to C-terminus: Fructose-bisphosphate aldolase C-A (364 aa).

Substrate-binding residues include Arg-56 and Lys-147. The active-site Proton acceptor is the Glu-188. Lys-230 acts as the Schiff-base intermediate with dihydroxyacetone-P in catalysis.

This sequence belongs to the class I fructose-bisphosphate aldolase family. As to quaternary structure, homotetramer. Expressed specifically in Purkinje cells in the brain.

The catalysed reaction is beta-D-fructose 1,6-bisphosphate = D-glyceraldehyde 3-phosphate + dihydroxyacetone phosphate. The protein operates within carbohydrate degradation; glycolysis; D-glyceraldehyde 3-phosphate and glycerone phosphate from D-glucose: step 4/4. The sequence is that of Fructose-bisphosphate aldolase C-A from Danio rerio (Zebrafish).